We begin with the raw amino-acid sequence, 310 residues long: Olfactory receptor 2A14 (310 aa).

Residues 1–24 (MEGNKTWITDITLPRFQVGPALEI) lie on the Extracellular side of the membrane. Asn4 carries an N-linked (GlcNAc...) asparagine glycan. Residues 25-48 (LLCGLFSAFYTLTLLGNGVIFGII) form a helical membrane-spanning segment. The Cytoplasmic segment spans residues 49–56 (CLDCKLHT). A helical membrane pass occupies residues 57–78 (PMYFFLSHLAIVDISYASNYVP). Topologically, residues 79-99 (KMLTNLMNQESTISFFPCIMQ) are extracellular. A disulfide bridge links Cys96 with Cys188. The chain crosses the membrane as a helical span at residues 100-119 (TFLYLAFAHVECLILVVMSY). At 120 to 138 (DRYADICHPLRYNSLMSWR) the chain is on the cytoplasmic side. A helical transmembrane segment spans residues 139 to 157 (VCTVLAVASWVFSFLLALV). Over 158–194 (PLVLILSLPFCGPHEINHFFCEILSVLKLACADTWLN) the chain is Extracellular. A helical membrane pass occupies residues 195–218 (QVVIFAACVFILVGPLCLVLVSYL). At 219–235 (RILAAILRIQSGEGRRK) the chain is on the cytoplasmic side. Residues 236 to 258 (AFSTCSSHLCVVGLFFGSAIVTY) traverse the membrane as a helical segment. Residues 259 to 271 (MAPKSRHPEEQQK) lie on the Extracellular side of the membrane. Residues 272–291 (VLSLFYSLFNPMLNPLIYSL) traverse the membrane as a helical segment. At 292-310 (RNAEVKGALRRALRKERLT) the chain is on the cytoplasmic side.

This sequence belongs to the G-protein coupled receptor 1 family.

The protein resides in the cell membrane. Odorant receptor. The sequence is that of Olfactory receptor 2A14 (OR2A14) from Homo sapiens (Human).